Reading from the N-terminus, the 132-residue chain is Small ribosomal subunit protein uS8 (132 aa).

It belongs to the universal ribosomal protein uS8 family. As to quaternary structure, part of the 30S ribosomal subunit. Contacts proteins S5 and S12.

One of the primary rRNA binding proteins, it binds directly to 16S rRNA central domain where it helps coordinate assembly of the platform of the 30S subunit. The polypeptide is Small ribosomal subunit protein uS8 (Kocuria rhizophila (strain ATCC 9341 / DSM 348 / NBRC 103217 / DC2201)).